We begin with the raw amino-acid sequence, 316 residues long: N-acetyl-gamma-glutamyl-phosphate reductase (316 aa).

Residue Cys136 is part of the active site.

This sequence belongs to the NAGSA dehydrogenase family. Type 1 subfamily.

Its subcellular location is the cytoplasm. It carries out the reaction N-acetyl-L-glutamate 5-semialdehyde + phosphate + NADP(+) = N-acetyl-L-glutamyl 5-phosphate + NADPH + H(+). Its pathway is amino-acid biosynthesis; L-arginine biosynthesis; N(2)-acetyl-L-ornithine from L-glutamate: step 3/4. Its function is as follows. Catalyzes the NADPH-dependent reduction of N-acetyl-5-glutamyl phosphate to yield N-acetyl-L-glutamate 5-semialdehyde. This Xanthomonas euvesicatoria pv. vesicatoria (strain 85-10) (Xanthomonas campestris pv. vesicatoria) protein is N-acetyl-gamma-glutamyl-phosphate reductase.